Consider the following 249-residue polypeptide: tRNA pseudouridine synthase A (249 aa).

Asp53 (nucleophile) is an active-site residue. Residue Tyr111 participates in substrate binding.

Belongs to the tRNA pseudouridine synthase TruA family. As to quaternary structure, homodimer.

It catalyses the reaction uridine(38/39/40) in tRNA = pseudouridine(38/39/40) in tRNA. Its function is as follows. Formation of pseudouridine at positions 38, 39 and 40 in the anticodon stem and loop of transfer RNAs. This Streptococcus pneumoniae serotype 19F (strain G54) protein is tRNA pseudouridine synthase A.